Here is a 242-residue protein sequence, read N- to C-terminus: Aspartate/glutamate leucyltransferase (242 aa).

It belongs to the R-transferase family. Bpt subfamily.

The protein localises to the cytoplasm. The catalysed reaction is N-terminal L-glutamyl-[protein] + L-leucyl-tRNA(Leu) = N-terminal L-leucyl-L-glutamyl-[protein] + tRNA(Leu) + H(+). The enzyme catalyses N-terminal L-aspartyl-[protein] + L-leucyl-tRNA(Leu) = N-terminal L-leucyl-L-aspartyl-[protein] + tRNA(Leu) + H(+). In terms of biological role, functions in the N-end rule pathway of protein degradation where it conjugates Leu from its aminoacyl-tRNA to the N-termini of proteins containing an N-terminal aspartate or glutamate. In Chromobacterium violaceum (strain ATCC 12472 / DSM 30191 / JCM 1249 / CCUG 213 / NBRC 12614 / NCIMB 9131 / NCTC 9757 / MK), this protein is Aspartate/glutamate leucyltransferase.